Here is a 360-residue protein sequence, read N- to C-terminus: MKAIIVLLMVVTSNADRICTGITSSNSPHVVKTATQGEVNVTGVIPLTTTPTKSHFANLKGTKTRGKLCPNCLNCTDLDVALARPMCMGIIPSAKASILHEVRPVTSGCFPIMHDRTKIRQLPNLLRGYENIRLSTHNVINAERAPGGPYRLGTSGSCPNVTSRSGFFATMAWAVPRDNKTATNPLTVEVPYICTKGEDQITVWGFHSDKKTQMKNLYGDSNPQKFTSSANGVTTHYVSQIGDFPNQTEDGGLPQSGRIVVDYMVQKPGKTGTIVYQRGVLLPQKVWCASGRSKVIKGSLPLIGEADCLHAKYGGLNKSKPYYTGEHAKAIGNCPIWVKTPLKLANGTKYRPPAKLLKER.

A signal peptide spans Met-1–Ala-15. Asn-40, Asn-74, Asn-160, Asn-179, Asn-246, Asn-317, and Asn-346 each carry an N-linked (GlcNAc...) asparagine; by host glycan.

It belongs to the influenza viruses hemagglutinin family. As to quaternary structure, homotrimer of disulfide-linked HA1-HA2. In terms of processing, in natural infection, inactive HA is matured into HA1 and HA2 outside the cell by one or more trypsin-like, arginine-specific endoprotease secreted by the bronchial epithelial cells. One identified protease that may be involved in this process is secreted in lungs by club cells. Palmitoylated.

It is found in the virion membrane. The protein localises to the host apical cell membrane. Functionally, binds to sialic acid-containing receptors on the cell surface, bringing about the attachment of the virus particle to the cell. Plays a major role in the determination of host range restriction and virulence. Class I viral fusion protein. Responsible for penetration of the virus into the cell cytoplasm by mediating the fusion of the membrane of the endocytosed virus particle with the endosomal membrane. Low pH in endosomes induce an irreversible conformational change in HA2, releasing the fusion hydrophobic peptide. Several trimers are required to form a competent fusion pore. The protein is Hemagglutinin (HA) of Influenza B virus (strain B/Guangdong/55/1989).